The sequence spans 820 residues: MLAAMGLELVFSLLLLWTQGTQGSTLDPAGQHVCKGSSPSELQCCPGWRQKDQECTIPICEGPDACRKEEVCVKPGLCRCKPGFFGAQCSSRCPGQYWGHDCRETCPCHPRGQCEPATGDCQCQPNYWGRLCEFPCTCGPHGQCDPKTGLCHCDPGWWSPTCRRPCQCNPASRCDQATGTCVCPPGWWGRRCSFSCNCHTSPCMQDSGRCVCLPGWWGPECSRKCQCVRGQCSVTSGHCSCPPGFHGIRCELPCNPGHYGAQCKESCGHCELNATCSPVTGNCESCKPGWNGTQCKQPCPAGTFGERCTGQCPRCRLGEPCQAETGHCQHCDPGWLGHRCENPCPLGTFGKGCSSTCPACAQGTCDAVTGECVCSAGYWGTSCNSSCPAGFHGNNCSMPCQCPEGLCHPVSGTCQLGRHGKNALIVGILVPLLLLLMGIVCCAYCCSGTRLDPKDRPERNGAAFFRMKQQVWGALTNLGSALPCGSLSNYKLPWVTVSHHDPEVPFNHSFIEPPSAGWASDDSFSSDPDSGEEDEAHAYFVPPREEMVPMAQEESPEASLPGGSFPPPEDASTPFPIPRTSSLARAKRPSVSFAEGTKFAPQNGRSSGDLSSPIRKPKRLSRGAQPRPEGQEAEESTGPEQVNTEEDAPTATSSGDPATSHGQLPPGSQMVAECAETTDGGIQESSGSVATIYMLAGTPQKPEGPVWSVFRRLGNYQKDQMDPKVKSAIPKPLRRSLGRNQASAGSAPGAVLSQAMESTAVRPEETPRGLGDGIESSGTVQEPDAGGSSLEQDSQKQAEEKEQEEPLYENVVPMSVPPQH.

The N-terminal stretch at 1–23 (MLAAMGLELVFSLLLLWTQGTQG) is a signal peptide. Residues 24 to 422 (STLDPAGQHV…TCQLGRHGKN (399 aa)) are Extracellular-facing. EGF-like domains are found at residues 56-90 (TIPICEGPDACRKEEVCVKPGLCRCKPGFFGAQCS), 98-133 (WGHDCRETCPCHPRGQCEPATGDCQCQPNYWGRLCE), 163-193 (RRPCQCNPASRCDQATGTCVCPPGWWGRRCS), and 217-251 (WGPECSRKCQCVRGQCSVTSGHCSCPPGFHGIRCE). Disulfide bonds link cysteine 60/cysteine 72, cysteine 66/cysteine 78, cysteine 80/cysteine 89, cysteine 102/cysteine 114, cysteine 108/cysteine 121, cysteine 123/cysteine 132, cysteine 166/cysteine 174, cysteine 168/cysteine 181, cysteine 183/cysteine 192, cysteine 221/cysteine 232, cysteine 225/cysteine 239, and cysteine 241/cysteine 250. The N-linked (GlcNAc...) asparagine glycan is linked to asparagine 291. 2 EGF-like domains span residues 304 to 341 (FGERCTGQCPRCRLGEPCQAETGHCQHCDPGWLGHRCE) and 353 to 384 (CSSTCPACAQGTCDAVTGECVCSAGYWGTSCN). A helical membrane pass occupies residues 423-443 (ALIVGILVPLLLLLMGIVCCA). Over 444-820 (YCCSGTRLDP…VVPMSVPPQH (377 aa)) the chain is Cytoplasmic. 2 disordered regions span residues 549–685 (PMAQ…IQES) and 715–820 (NYQK…PPQH). Residues serine 590 and serine 607 each carry the phosphoserine modification. A compositionally biased stretch (acidic residues) spans 631–648 (QEAEESTGPEQVNTEEDA). Residues 650-662 (TATSSGDPATSHG) are compositionally biased toward polar residues.

In terms of assembly, heterophilic interaction with SREC2 via its extracellular domain. The heterophilic interaction is suppressed by the presence of ligand such as Ac-LDL. Interacts with AVIL; the interaction occurs in embryonic dorsal root ganglions at 18 dpc and induces neurite-like outgrowth. In terms of tissue distribution, expressed weakly in brain, spinal cord and dorsal root ganglions.

The protein resides in the membrane. Its function is as follows. Mediates the binding and degradation of acetylated low density lipoprotein (Ac-LDL). Mediates heterophilic interactions, suggesting a function as adhesion protein. Plays a role in the regulation of neurite-like outgrowth. This Mus musculus (Mouse) protein is Scavenger receptor class F member 1 (Scarf1).